A 123-amino-acid chain; its full sequence is UPF0102 protein Mflv_4140 (123 aa).

It belongs to the UPF0102 family.

The chain is UPF0102 protein Mflv_4140 from Mycolicibacterium gilvum (strain PYR-GCK) (Mycobacterium gilvum (strain PYR-GCK)).